Here is a 737-residue protein sequence, read N- to C-terminus: Zinc finger protein 280C (737 aa).

Residues Lys5, Lys10, Lys14, Lys33, and Lys55 each participate in a glycyl lysine isopeptide (Lys-Gly) (interchain with G-Cter in SUMO2) cross-link. Residues 57–66 show a composition bias toward polar residues; that stretch reads AISNILNRGH. Residues 57–137 are disordered; sequence AISNILNRGH…DFTKNSQVGS (81 aa). Lys75 is covalently cross-linked (Glycyl lysine isopeptide (Lys-Gly) (interchain with G-Cter in SUMO2)). Ser80 is subject to Phosphoserine. The segment covering 112 to 123 has biased composition (polar residues); the sequence is SKSSQSSVTVEN. Glycyl lysine isopeptide (Lys-Gly) (interchain with G-Cter in SUMO2) cross-links involve residues Lys113, Lys126, Lys167, Lys174, Lys180, and Lys187. Residues 176–185 show a composition bias toward polar residues; that stretch reads PSTSKVNSVT. The segment at 176 to 223 is disordered; the sequence is PSTSKVNSVTPKKPKTSEDVPQINPSTSLPLIGSPPVTSSQVMLSKGT. Residues 211–223 are compositionally biased toward polar residues; that stretch reads PVTSSQVMLSKGT. Thr223 bears the Phosphothreonine mark. The residue at position 227 (Ser227) is a Phosphoserine. Residue Lys273 forms a Glycyl lysine isopeptide (Lys-Gly) (interchain with G-Cter in SUMO2) linkage. 5 C2H2-type zinc fingers span residues 316 to 338, 353 to 376, 383 to 406, 413 to 436, and 470 to 492; these read FKCF…MKHH, TTCQ…ESTH, TICK…KDTH, YVCQ…RAAH, and HRCP…KAQH. Residue Lys522 forms a Glycyl lysine isopeptide (Lys-Gly) (interchain with G-Cter in SUMO2) linkage. Over residues 535-579 the composition is skewed to polar residues; that stretch reads SFLQVTPPTSQNTTARNPRKSNASRSKTSKLHATTSTASKVNTSK. The tract at residues 535 to 602 is disordered; the sequence is SFLQVTPPTS…YKQKRQRNRK (68 aa). Thr540 carries the post-translational modification Phosphothreonine. Glycyl lysine isopeptide (Lys-Gly) (interchain with G-Cter in SUMO2) cross-links involve residues Lys564 and Lys574. Basic residues predominate over residues 580 to 602; it reads PRGRIAKSKAKPSYKQKRQRNRK.

The protein resides in the nucleus. Functionally, may function as a transcription factor. The polypeptide is Zinc finger protein 280C (ZNF280C) (Homo sapiens (Human)).